A 485-amino-acid polypeptide reads, in one-letter code: Glutamate--tRNA ligase 1 (485 aa).

Positions Pro10–Asn20 match the 'HIGH' region motif. The short motif at Lys252–Arg256 is the 'KMSKS' region element. Position 255 (Lys255) interacts with ATP.

This sequence belongs to the class-I aminoacyl-tRNA synthetase family. Glutamate--tRNA ligase type 1 subfamily. Monomer.

The protein resides in the cytoplasm. The enzyme catalyses tRNA(Glu) + L-glutamate + ATP = L-glutamyl-tRNA(Glu) + AMP + diphosphate. Its function is as follows. Catalyzes the attachment of glutamate to tRNA(Glu) in a two-step reaction: glutamate is first activated by ATP to form Glu-AMP and then transferred to the acceptor end of tRNA(Glu). The protein is Glutamate--tRNA ligase 1 of Thermoanaerobacter pseudethanolicus (strain ATCC 33223 / 39E) (Clostridium thermohydrosulfuricum).